Consider the following 855-residue polypeptide: Vomeronasal type-2 receptor 26 (855 aa).

An N-terminal signal peptide occupies residues 1-22 (MKLLTAFSPLVVLILFQEQISC). Over 23 to 595 (YYLTKYASSG…FLAHEDPLGT (573 aa)) the chain is Extracellular. N-linked (GlcNAc...) asparagine glycosylation is found at asparagine 101 and asparagine 295. Residues 596 to 616 (VLVSLAISLSAFSAMILGLFI) traverse the membrane as a helical segment. Residues 617 to 630 (CYRETPIVRANNRN) lie on the Cytoplasmic side of the membrane. The helical transmembrane segment at 631 to 651 (LSYLLLISLKLCFSCSLMFIG) threads the bilayer. At 652-662 (QPRTVTCVLRQ) the chain is on the extracellular side. A helical transmembrane segment spans residues 663 to 683 (IIFGIVFSIVISAILAKTFIV). Residues 684-706 (VMAFKAIKPGSILKMGMVTRLSN) are Cytoplasmic-facing. Residues 707–727 (AIVCCGSIIQVCICAVWLGTY) traverse the membrane as a helical segment. Over 728-753 (PPFPDVDMHSEFGQIILWCNEGSTLA) the chain is Extracellular. A helical transmembrane segment spans residues 754-774 (FYCVLGYLGFLASLSLLIAFL). Topologically, residues 775-786 (ARRLPDSFNEAK) are cytoplasmic. A helical membrane pass occupies residues 787–807 (TITFSMLVFCSVWISFVPAYL). Topologically, residues 808–814 (SSKGKTM) are extracellular. The chain crosses the membrane as a helical span at residues 815-835 (VAVEILSILASSAGLLGCIFL). At 836-855 (PKCYVILLKSGGHSRKKFFK) the chain is on the cytoplasmic side.

It belongs to the G-protein coupled receptor 3 family. In terms of tissue distribution, expressed in the basal epithelium of the vomeronasal organ. Located to vomeronasal sensory neurons that project their axons to six to ten glomeruli that reside in globally conserved areas within the caudal accessory olfactory bulb (AOB).

Its subcellular location is the cell membrane. Functionally, putative pheromone receptor. The chain is Vomeronasal type-2 receptor 26 (Vmn2r26) from Mus musculus (Mouse).